The chain runs to 714 residues: Cadherin-13 (714 aa).

Positions 1–22 (MQPRTPLTLCVLLSQVLLVTSA) are cleaved as a signal peptide. Positions 23-138 (DDLECTPGFQ…RTSPVPRQKR (116 aa)) are excised as a propeptide. 5 Cadherin domains span residues 143–245 (SPIL…RPIF), 246–363 (REGP…SPKF), 364–477 (TKKE…GPVF), 478–585 (YPDP…APVI), and 586–680 (YPTV…VQVC). A disordered region spans residues 156–183 (PRDVGKVVDSDRPEGSKFRLTGKGVDQD). Residues 158–172 (DVGKVVDSDRPEGSK) show a composition bias toward basic and acidic residues. N-linked (GlcNAc...) asparagine glycosylation is found at Asn382, Asn489, Asn500, Asn530, Asn598, Asn638, and Asn671. A lipid anchor (GPI-anchor amidated glycine) is attached at Gly693. A propeptide spans 694-714 (ALHLSLSLLLLFSLLSLLSGL) (removed in mature form).

In terms of assembly, by contrast to classical cadherins, homodimerization in trans is not mediated by cadherin EC1 domain strand-swapping, but instead through a homophilic adhesive interface which joins two elongated EC1-EC2 domains through a region near their Ca2+-binding sites to form a tetrahedral, X-like shape.

It localises to the cell membrane. It is found in the cytoplasm. Cadherins are calcium-dependent cell adhesion proteins. They preferentially interact with themselves in a homophilic manner in connecting cells; cadherins may thus contribute to the sorting of heterogeneous cell types. May act as a negative regulator of neural cell growth. The sequence is that of Cadherin-13 (Cdh13) from Mus musculus (Mouse).